The chain runs to 635 residues: Probable ethylene response sensor 2 (635 aa).

Helical transmembrane passes span 24-44, 59-79, and 94-114; these read ISDFFIALAYFSIPLELIYFV, FGAFIVLCGATHLINLWTFAI, and ATAVVSCITALMLVHIIPDLL. Cu cation-binding residues include Cys-66 and His-70. Residues 159–308 enclose the GAF domain; it reads DRHTILRTTL…VVADQVAVAL (150 aa). Residues 351–589 form the Histidine kinase domain; the sequence is VMNHEMRTPM…MFFVKLGMPE (239 aa). His-354 is modified (phosphohistidine; by autocatalysis).

Belongs to the ethylene receptor family. Homodimer. The cofactor is Cu cation.

The protein resides in the endoplasmic reticulum membrane. It catalyses the reaction ATP + protein L-histidine = ADP + protein N-phospho-L-histidine.. Functionally, ethylene receptor related to bacterial two-component regulators. Acts as a negative regulator of ethylene signaling. May play a role in the regulation of flowering by up-regulating GI (GIGANTEA) and RCN1 and regulate starch accumulation by down-regulating the alpha-amylase AMY3D. In Oryza sativa subsp. japonica (Rice), this protein is Probable ethylene response sensor 2 (ERS2).